We begin with the raw amino-acid sequence, 172 residues long: 3-hydroxydecanoyl-[acyl-carrier-protein] dehydratase (172 aa).

The active site involves histidine 71.

This sequence belongs to the thioester dehydratase family. FabA subfamily. Homodimer.

It localises to the cytoplasm. The catalysed reaction is a (3R)-hydroxyacyl-[ACP] = a (2E)-enoyl-[ACP] + H2O. The enzyme catalyses (3R)-hydroxydecanoyl-[ACP] = (2E)-decenoyl-[ACP] + H2O. It catalyses the reaction (2E)-decenoyl-[ACP] = (3Z)-decenoyl-[ACP]. It participates in lipid metabolism; fatty acid biosynthesis. In terms of biological role, necessary for the introduction of cis unsaturation into fatty acids. Catalyzes the dehydration of (3R)-3-hydroxydecanoyl-ACP to E-(2)-decenoyl-ACP and then its isomerization to Z-(3)-decenoyl-ACP. Can catalyze the dehydratase reaction for beta-hydroxyacyl-ACPs with saturated chain lengths up to 16:0, being most active on intermediate chain length. This is 3-hydroxydecanoyl-[acyl-carrier-protein] dehydratase from Escherichia coli (strain SE11).